We begin with the raw amino-acid sequence, 225 residues long: 7-cyano-7-deazaguanine synthase (225 aa).

7-17 (LSGGMDSTTLL) provides a ligand contact to ATP. Cys183, Cys191, Cys194, and Cys197 together coordinate Zn(2+).

This sequence belongs to the QueC family. In terms of assembly, homodimer. The cofactor is Zn(2+).

The enzyme catalyses 7-carboxy-7-deazaguanine + NH4(+) + ATP = 7-cyano-7-deazaguanine + ADP + phosphate + H2O + H(+). It participates in purine metabolism; 7-cyano-7-deazaguanine biosynthesis. Its function is as follows. Catalyzes the ATP-dependent conversion of 7-carboxy-7-deazaguanine (CDG) to 7-cyano-7-deazaguanine (preQ(0)). The polypeptide is 7-cyano-7-deazaguanine synthase (Caldicellulosiruptor saccharolyticus (strain ATCC 43494 / DSM 8903 / Tp8T 6331)).